Consider the following 414-residue polypeptide: Sarcosine oxidase subunit beta (414 aa).

Residues G42, H43, E64, N72, T77, and I79 each contribute to the FAD site. H183 carries the tele-8alpha-FMN histidine modification. FAD contacts are provided by V207, G364, G367, and K369.

This sequence belongs to the SoxB family. As to quaternary structure, heterotetramer composed of subunits alpha (SoxA), beta (SoxB), gamma (SoxG) and delta (SoxD). It depends on FAD as a cofactor. FMN is required as a cofactor.

It localises to the cytoplasm. The enzyme catalyses sarcosine + (6S)-5,6,7,8-tetrahydrofolate + O2 = (6R)-5,10-methylene-5,6,7,8-tetrahydrofolate + glycine + H2O2. The catalysed reaction is sarcosine + O2 + H2O = formaldehyde + glycine + H2O2. Functionally, in the presence of tetrahydrofolate, catalyzes the oxidative demethylation of sarcosine to yield glycine, 5,10-methylenetetrahydrofolate and hydrogen peroxide. In the absence of tetrahydrofolate, catalyzes the oxidative demethylation of sarcosine to yield glycine, formaldehyde and hydrogen peroxide. This Rhodobacter capsulatus (strain ATCC BAA-309 / NBRC 16581 / SB1003) protein is Sarcosine oxidase subunit beta (soxB).